The chain runs to 1349 residues: ABC multidrug transporter mdr1 (1349 aa).

Residues 1–62 (MPAPETGASS…PDGKQKDHGK (62 aa)) form a disordered region. Over residues 35–45 (DNEKPHDHHSL) the composition is skewed to basic and acidic residues. Transmembrane regions (helical) follow at residues 108–128 (ILII…LPLF), 162–182 (YFVY…VGFI), 234–254 (KVGL…VAYV), and 257–277 (WKLA…MGGG). An ABC transmembrane type-1 1 domain is found at 112-402 (LVSAICAIAA…VAPNGQAFTN (291 aa)). An N-linked (GlcNAc...) asparagine glycan is attached at Asn308. A run of 2 helical transmembrane segments spans residues 339-359 (ILGM…GLGF) and 371-391 (VNVG…FSLG). The 246-residue stretch at 437-682 (IEFRNVKHIY…KGTYYKLVEA (246 aa)) folds into the ABC transporter 1 domain. 472–479 (GPSGSGKS) is a binding site for ATP. Transmembrane regions (helical) follow at residues 779-799 (MLIG…QAFL) and 828-848 (FFVV…AFAI). The ABC transmembrane type-1 2 domain occupies 780 to 1069 (LIGLTFSFLA…VFSFAPDMGK (290 aa)). N-linked (GlcNAc...) asparagine glycosylation is found at Asn878 and Asn893. 4 helical membrane-spanning segments follow: residues 896–916 (GVSG…GAAM), 926–948 (LALV…FYML), 1016–1036 (ALVF…LGHH), and 1043–1063 (FFVC…VFSF). Positions 1104-1342 (IEFRDVHFRY…KGRYYELVNL (239 aa)) constitute an ABC transporter 2 domain. N-linked (GlcNAc...) asparagine glycosylation is present at Asn1126. Residue 1139–1146 (GPSGCGKS) participates in ATP binding.

It belongs to the ABC transporter superfamily. ABCB family. Multidrug resistance exporter (TC 3.A.1.201) subfamily.

It is found in the cell membrane. The enzyme catalyses voriconazole(in) + ATP + H2O = voriconazole(out) + ADP + phosphate + H(+). In terms of biological role, pleiotropic ABC efflux transporter that may be involved in A.fumigatus adaptation to azoles such as vorizonazole. The sequence is that of ABC multidrug transporter mdr1 from Aspergillus fumigatus (strain ATCC MYA-4609 / CBS 101355 / FGSC A1100 / Af293) (Neosartorya fumigata).